The chain runs to 561 residues: Hemolysin transporter protein HpmB (561 aa).

The signal sequence occupies residues M1–S17. Residues L77 to G150 enclose the POTRA domain.

Belongs to the TPS (TC 1.B.20) family.

The protein resides in the cell outer membrane. In terms of biological role, interacts with the cell-bound hemolysin. Necessary for the extracellular secretion and activation of the hemolysin. Probable member of a two partner secretion pathway (TPS) in which it mediates the secretion of hemolysin. This is Hemolysin transporter protein HpmB (hpmB) from Proteus mirabilis.